A 138-amino-acid polypeptide reads, in one-letter code: Ribosome-binding factor A (138 aa).

The segment at 119-138 (DMDEKKNSDEKRDSDEKLED) is disordered.

It belongs to the RbfA family. In terms of assembly, monomer. Binds 30S ribosomal subunits, but not 50S ribosomal subunits or 70S ribosomes.

The protein resides in the cytoplasm. One of several proteins that assist in the late maturation steps of the functional core of the 30S ribosomal subunit. Associates with free 30S ribosomal subunits (but not with 30S subunits that are part of 70S ribosomes or polysomes). Required for efficient processing of 16S rRNA. May interact with the 5'-terminal helix region of 16S rRNA. This Alkaliphilus metalliredigens (strain QYMF) protein is Ribosome-binding factor A.